The chain runs to 207 residues: Ribonuclease HII (207 aa).

One can recognise an RNase H type-2 domain in the interval 18–207 (TYLSGSDEAG…PIKKISKETS (190 aa)). 3 residues coordinate a divalent metal cation: Asp-24, Glu-25, and Asp-116.

Belongs to the RNase HII family. Mn(2+) serves as cofactor. Mg(2+) is required as a cofactor.

It is found in the cytoplasm. The catalysed reaction is Endonucleolytic cleavage to 5'-phosphomonoester.. Its function is as follows. Endonuclease that specifically degrades the RNA of RNA-DNA hybrids. The polypeptide is Ribonuclease HII (Mycoplasma capricolum subsp. capricolum (strain California kid / ATCC 27343 / NCTC 10154)).